The following is a 147-amino-acid chain: MVHFTTEENVAVASLWAKVNVEVVGGESLARLLIVCPWTQRFFDSFGNLYSESAIMGNPKVKVYGRKVLNSFGNAIKHMDDLKGTFADLSELHCDKLHVDPENFRLLGNMILIVLATHFSKEFTPQMQAAWQKLTNAVANALTHKYH.

Positions 3-147 (HFTTEENVAV…VANALTHKYH (145 aa)) constitute a Globin domain. Heme b is bound by residues Tyr64 and His93.

It belongs to the globin family. In terms of tissue distribution, red blood cells.

Hemoglobin epsilon chain is a beta-type chain found in early embryos. This is Hemoglobin subunit epsilon-2 (HBE2) from Bos taurus (Bovine).